The primary structure comprises 332 residues: Ketol-acid reductoisomerase (NADP(+)) (332 aa).

The 182-residue stretch at 1 to 182 (MATIYRDKDA…GGTRAGVLET (182 aa)) folds into the KARI N-terminal Rossmann domain. Residues 25-28 (YGNQ), Lys49, Ser51, and 83-86 (DELQ) contribute to the NADP(+) site. His108 is a catalytic residue. An NADP(+)-binding site is contributed by Gly134. The KARI C-terminal knotted domain occupies 183 to 328 (TFAEETETDL…AELRAMMPWL (146 aa)). Residues Asp191, Glu195, Glu227, and Glu231 each contribute to the Mg(2+) site. Substrate is bound at residue Ser252.

It belongs to the ketol-acid reductoisomerase family. It depends on Mg(2+) as a cofactor.

It catalyses the reaction (2R)-2,3-dihydroxy-3-methylbutanoate + NADP(+) = (2S)-2-acetolactate + NADPH + H(+). The enzyme catalyses (2R,3R)-2,3-dihydroxy-3-methylpentanoate + NADP(+) = (S)-2-ethyl-2-hydroxy-3-oxobutanoate + NADPH + H(+). Its pathway is amino-acid biosynthesis; L-isoleucine biosynthesis; L-isoleucine from 2-oxobutanoate: step 2/4. It participates in amino-acid biosynthesis; L-valine biosynthesis; L-valine from pyruvate: step 2/4. Involved in the biosynthesis of branched-chain amino acids (BCAA). Catalyzes an alkyl-migration followed by a ketol-acid reduction of (S)-2-acetolactate (S2AL) to yield (R)-2,3-dihydroxy-isovalerate. In the isomerase reaction, S2AL is rearranged via a Mg-dependent methyl migration to produce 3-hydroxy-3-methyl-2-ketobutyrate (HMKB). In the reductase reaction, this 2-ketoacid undergoes a metal-dependent reduction by NADPH to yield (R)-2,3-dihydroxy-isovalerate. This chain is Ketol-acid reductoisomerase (NADP(+)), found in Methanothrix thermoacetophila (strain DSM 6194 / JCM 14653 / NBRC 101360 / PT) (Methanosaeta thermophila).